We begin with the raw amino-acid sequence, 134 residues long: Thionin-2.1 (134 aa).

An N-terminal signal peptide occupies residues 1–24; sequence MKGRILILSLLIMSLVMAQVQVEA. 3 cysteine pairs are disulfide-bonded: Cys-27-Cys-61, Cys-28-Cys-55, and Cys-40-Cys-49. Residues 68 to 134 constitute a propeptide, acidic domain; that stretch reads AILENSADAT…VVPPGPPKLL (67 aa).

This sequence belongs to the plant thionin (TC 1.C.44) family. Detected in rosette leaves and at a very high level in flowers and in siliques.

The protein resides in the secreted. In terms of biological role, seems to function as a defense factor. Thionins are small plant proteins which are toxic to animal cells. They seem to exert their toxic effect at the level of the cell membrane. Their precise function is not known. The chain is Thionin-2.1 (THI2.1) from Arabidopsis thaliana (Mouse-ear cress).